The sequence spans 2787 residues: Serine/threonine-protein kinase TEL1 (2787 aa).

Residues 1734–2326 form the FAT domain; it reads EICQISLKIK…LYSVMSILLY (593 aa). A PI3K/PI4K catalytic domain is found at 2434–2746; it reads NETVGITTTG…ENQESYRALK (313 aa). The tract at residues 2440 to 2446 is G-loop; that stretch reads TTTGLSL. The interval 2609 to 2617 is catalytic loop; the sequence is GLGDRHLNN. Residues 2629 to 2653 are activation loop; the sequence is HIDLGIAFDQGKLLPIPELVPFRLT. Residues 2755–2787 enclose the FATC domain; it reads NGLSVESSVQDLIQQATDPSNLSVIYMGWSPFY.

It belongs to the PI3/PI4-kinase family. ATM subfamily. As to quaternary structure, interacts with XRS2 and associates with DNA double-strand breaks.

Its subcellular location is the nucleus. The protein resides in the chromosome. The protein localises to the telomere. The catalysed reaction is L-seryl-[protein] + ATP = O-phospho-L-seryl-[protein] + ADP + H(+). It carries out the reaction L-threonyl-[protein] + ATP = O-phospho-L-threonyl-[protein] + ADP + H(+). Its function is as follows. Serine/threonine protein kinase which activates checkpoint signaling upon genotoxic stresses such as ionizing radiation (IR), ultraviolet light (UV), or DNA replication stalling, thereby acting as a DNA damage sensor. Recognizes the substrate consensus sequence [ST]-Q. Recruited by the MRX-complex to sites of DNA lesions immediately after damage to initiate non-homologous end-joining (NHEJ). Subsequently displaced by the RPA complex in a reaction probably involving the SAE2 protein. Phosphorylates MRE11 and XRS2, 2 subunits of the MRX-complex. The phosphorylation of MRE11 is a feedback response from the checkpoint signaling pathway. Phosphorylates RAD9, CHK1 and RAD53, leading to the activation of the CHK1 and RAD23 kinases involved in the DNA damage response cascade. Phosphorylates histone H2A to form H2AS128ph (gamma-H2A) at sites of DNA damage, also involved in the regulation of DNA damage response mechanism. Also phosphorylates SLX4 and RTT107 which are involved in genome stability. Required for the control of telomere length and genome stability. In Saccharomyces cerevisiae (strain ATCC 204508 / S288c) (Baker's yeast), this protein is Serine/threonine-protein kinase TEL1 (TEL1).